The following is a 67-amino-acid chain: UPF0253 protein VV2574 (67 aa).

Belongs to the UPF0253 family.

The polypeptide is UPF0253 protein VV2574 (Vibrio vulnificus (strain YJ016)).